We begin with the raw amino-acid sequence, 128 residues long: Ribosome-binding factor A (128 aa).

Belongs to the RbfA family. In terms of assembly, monomer. Binds 30S ribosomal subunits, but not 50S ribosomal subunits or 70S ribosomes.

Its subcellular location is the cytoplasm. In terms of biological role, one of several proteins that assist in the late maturation steps of the functional core of the 30S ribosomal subunit. Associates with free 30S ribosomal subunits (but not with 30S subunits that are part of 70S ribosomes or polysomes). Required for efficient processing of 16S rRNA. May interact with the 5'-terminal helix region of 16S rRNA. This chain is Ribosome-binding factor A, found in Idiomarina loihiensis (strain ATCC BAA-735 / DSM 15497 / L2-TR).